We begin with the raw amino-acid sequence, 214 residues long: Cytochrome c biogenesis ATP-binding export protein CcmA (214 aa).

The region spanning 12–214 (LAARALAFSR…TRMLTLEAAA (203 aa)) is the ABC transporter domain. Position 44 to 51 (44 to 51 (GDNGAGKT)) interacts with ATP.

Belongs to the ABC transporter superfamily. CcmA exporter (TC 3.A.1.107) family. In terms of assembly, the complex is composed of two ATP-binding proteins (CcmA) and two transmembrane proteins (CcmB).

It localises to the cell inner membrane. It catalyses the reaction heme b(in) + ATP + H2O = heme b(out) + ADP + phosphate + H(+). Functionally, part of the ABC transporter complex CcmAB involved in the biogenesis of c-type cytochromes; once thought to export heme, this seems not to be the case, but its exact role is uncertain. Responsible for energy coupling to the transport system. The polypeptide is Cytochrome c biogenesis ATP-binding export protein CcmA (Xanthomonas campestris pv. campestris (strain 8004)).